Here is a 272-residue protein sequence, read N- to C-terminus: Prohibitin 1 (272 aa).

The residue at position 2 (Ala2) is an N-acetylalanine. Thr91 carries the phosphothreonine modification. Residues Lys128 and Lys186 each carry the N6-acetyllysine modification. Residues 177–211 adopt a coiled-coil conformation; that stretch reads KEFTEAVEAKQVAQQEAERARFVVEKAEQQKKAAI. Residue Lys202 is modified to N6-acetyllysine; alternate. Residue Lys202 is modified to N6-succinyllysine; alternate. Tyr249 bears the Phosphotyrosine mark.

The protein belongs to the prohibitin family. The mitochondrial prohibitin complex consists of two subunits (PHB1 and PHB2), assembled into a membrane-associated ring-shaped supercomplex of approximately 1 mDa. Interacts with STOML2. Interacts with MAP1LC3B (membrane-bound form LC3-II); the interaction requires PHB2 and takes place upon Parkin-mediated mitochondrial damage. Interacts with STAT3 (unphosphorylated or phosphorylated at 'Ser-727'). Interacts with CLPB. Interacts with CD86 (via cytoplasmic domain); the interactions increases after priming with CD40.

It is found in the mitochondrion inner membrane. The protein resides in the nucleus. The protein localises to the cytoplasm. It localises to the cell membrane. In terms of biological role, protein with pleiotropic attributes mediated in a cell-compartment- and tissue-specific manner, which include the plasma membrane-associated cell signaling functions, mitochondrial chaperone, and transcriptional co-regulator of transcription factors in the nucleus. Plays a role in adipose tissue and glucose homeostasis in a sex-specific manner. Contributes to pulmonary vascular remodeling by accelerating proliferation of pulmonary arterial smooth muscle cells. Its function is as follows. In the mitochondria, together with PHB2, forms large ring complexes (prohibitin complexes) in the inner mitochondrial membrane (IMM) and functions as a chaperone protein that stabilizes mitochondrial respiratory enzymes and maintains mitochondrial integrity in the IMM, which is required for mitochondrial morphogenesis, neuronal survival, and normal lifespan. The prohibitin complex, with DNAJC19, regulates cardiolipin remodeling and the protein turnover of OMA1 in a cardiolipin-binding manner. Regulates mitochondrial respiration activity playing a role in cellular aging. The prohibitin complex plays a role of mitophagy receptor involved in targeting mitochondria for autophagic degradation. Involved in mitochondrial-mediated antiviral innate immunity, activates RIG-I-mediated signal transduction and production of IFNB1 and proinflammatory cytokine IL6. Functionally, in the nucleus, acts as a transcription coregulator, enhances promoter binding by TP53, a transcription factor it activates, but reduces the promoter binding by E2F1, a transcription factor it represses. Interacts with STAT3 to affect IL17 secretion in T-helper Th17 cells. In the plasma membrane, cooperates with CD86 to mediate CD86-signaling in B lymphocytes that regulates the level of IgG1 produced through the activation of distal signaling intermediates. Upon CD40 engagement, required to activate NF-kappa-B signaling pathway via phospholipase C and protein kinase C activation. The protein is Prohibitin 1 (PHB1) of Bos taurus (Bovine).